A 324-amino-acid chain; its full sequence is VDQCTGLQGFLIFHSFGGGTGSGFTSLLMERLSVDYGKKSKLEFAIYPAPQVSTAVVEPYNSILTTHTTLEQSDCAFMVDNEAIYDICRRNLDIERPTYTNLNRLIGQIVSSITASLRFDGALNVDLTEFQTNLVPYPRIHFPLVTYSPIISAEKAYHEQLSVSEITNACFEPSNQMVKCDPRHGKYMACCMLYRGDVVPKDVNAAIAAIKTKRTIQFVDWCPTGFKVGINYQPPTVVPGGDLAKVQRAVCMLSNTTAIAEAWARLDHKFDLMYAKRAFVHWYVGEGMEEGEFSEAREDLAALEKDYEEVGTDSMDGEDEGEEY.

Residues S15, G19, T20, T54, N81, and N103 each contribute to the GTP site. E129 is an active-site residue.

The protein belongs to the tubulin family. In terms of assembly, dimer of alpha and beta chains. A typical microtubule is a hollow water-filled tube with an outer diameter of 25 nm and an inner diameter of 15 nM. Alpha-beta heterodimers associate head-to-tail to form protofilaments running lengthwise along the microtubule wall with the beta-tubulin subunit facing the microtubule plus end conferring a structural polarity. Microtubules usually have 13 protofilaments but different protofilament numbers can be found in some organisms and specialized cells. The cofactor is Mg(2+). In terms of processing, some glutamate residues at the C-terminus are polyglycylated, resulting in polyglycine chains on the gamma-carboxyl group. Glycylation is mainly limited to tubulin incorporated into axonemes (cilia and flagella) whereas glutamylation is prevalent in neuronal cells, centrioles, axonemes, and the mitotic spindle. Both modifications can coexist on the same protein on adjacent residues, and lowering polyglycylation levels increases polyglutamylation, and reciprocally. The precise function of polyglycylation is still unclear. Post-translationally, some glutamate residues at the C-terminus are polyglutamylated, resulting in polyglutamate chains on the gamma-carboxyl group. Polyglutamylation plays a key role in microtubule severing by spastin (SPAST). SPAST preferentially recognizes and acts on microtubules decorated with short polyglutamate tails: severing activity by SPAST increases as the number of glutamates per tubulin rises from one to eight, but decreases beyond this glutamylation threshold.

The protein localises to the cytoplasm. It localises to the cytoskeleton. It carries out the reaction GTP + H2O = GDP + phosphate + H(+). Its function is as follows. Tubulin is the major constituent of microtubules, a cylinder consisting of laterally associated linear protofilaments composed of alpha- and beta-tubulin heterodimers. Microtubules grow by the addition of GTP-tubulin dimers to the microtubule end, where a stabilizing cap forms. Below the cap, tubulin dimers are in GDP-bound state, owing to GTPase activity of alpha-tubulin. This Gallus gallus (Chicken) protein is Tubulin alpha-8 chain.